The following is a 261-amino-acid chain: Small ribosomal subunit protein uS2 (261 aa).

The tract at residues 224 to 261 (GRQGEDDEAVQQEEVAEGVSKDSLEDLKKTVEEGSNEE) is disordered. Over residues 228–239 (EDDEAVQQEEVA) the composition is skewed to acidic residues. The segment covering 242–255 (VSKDSLEDLKKTVE) has biased composition (basic and acidic residues).

Belongs to the universal ribosomal protein uS2 family.

In Pediococcus acidilactici, this protein is Small ribosomal subunit protein uS2 (rpsB).